Here is a 382-residue protein sequence, read N- to C-terminus: MKALHFGAGNIGRGFIGKLLADANVELTFADVNQPLLDALNSRKSYSVRIVGDNTQVEAVSNVSAVHSGSQDAIALIAAADLVTTAVGPQILEKIAGTIAQGLVKRHEDGNTRPLNIIACENMVRGTSQLKQHVLKLLPEAHQEWVVEHVGFVDSAVDRIVPPSEAGSDDVLAVTVETFSEWIVDKTQFCGEPPAIPGMELTDNLMAFVERKLFTLNTGHAITAYLGQQARHQTIRDAILDPKVRAVVKGAMEESGAVLIKRYGFDADKHAAYINKILSRFENPHLHDDVDRVGRQPLRKLSAGDRLIKPLLGTLEYHLPHDNLIIGIAAAMHYRSEQDPQALELAELIRTLGPQATLVQISGLDADSEVVAQAVNVYNAMQ.

Position 3-14 (3-14 (ALHFGAGNIGRG)) interacts with NAD(+).

The protein belongs to the mannitol dehydrogenase family.

The enzyme catalyses D-mannitol 1-phosphate + NAD(+) = beta-D-fructose 6-phosphate + NADH + H(+). The sequence is that of Mannitol-1-phosphate 5-dehydrogenase from Pectobacterium atrosepticum (strain SCRI 1043 / ATCC BAA-672) (Erwinia carotovora subsp. atroseptica).